A 309-amino-acid chain; its full sequence is 5-oxoprolinase subunit C (309 aa).

It belongs to the PxpC family. Forms a complex composed of PxpA, PxpB and PxpC.

It carries out the reaction 5-oxo-L-proline + ATP + 2 H2O = L-glutamate + ADP + phosphate + H(+). In terms of biological role, catalyzes the cleavage of 5-oxoproline to form L-glutamate coupled to the hydrolysis of ATP to ADP and inorganic phosphate. The sequence is that of 5-oxoprolinase subunit C from Haemophilus influenzae (strain ATCC 51907 / DSM 11121 / KW20 / Rd).